Here is a 257-residue protein sequence, read N- to C-terminus: NAD-capped RNA hydrolase NudC (257 aa).

The substrate site is built by Lys-25 and Arg-69. The Zn(2+) site is built by Cys-98 and Cys-101. Glu-111 contacts substrate. 2 residues coordinate Zn(2+): Cys-116 and Cys-119. A substrate-binding site is contributed by Tyr-124. The Nudix hydrolase domain occupies 125–248 (PQIAPCIIVA…TVARRLIEDT (124 aa)). A divalent metal cation contacts are provided by Ala-158, Glu-174, and Glu-178. The short motif at 159–180 (GFVEVGETLEQAVAREVMEESG) is the Nudix box element. 192–199 (QPWPFPQS) provides a ligand contact to substrate. Glu-219 contacts a divalent metal cation. Ala-241 contributes to the substrate binding site.

This sequence belongs to the Nudix hydrolase family. NudC subfamily. In terms of assembly, homodimer. Mg(2+) is required as a cofactor. It depends on Mn(2+) as a cofactor. Zn(2+) serves as cofactor.

The enzyme catalyses a 5'-end NAD(+)-phospho-ribonucleoside in mRNA + H2O = a 5'-end phospho-adenosine-phospho-ribonucleoside in mRNA + beta-nicotinamide D-ribonucleotide + 2 H(+). The catalysed reaction is NAD(+) + H2O = beta-nicotinamide D-ribonucleotide + AMP + 2 H(+). It catalyses the reaction NADH + H2O = reduced beta-nicotinamide D-ribonucleotide + AMP + 2 H(+). MRNA decapping enzyme that specifically removes the nicotinamide adenine dinucleotide (NAD) cap from a subset of mRNAs by hydrolyzing the diphosphate linkage to produce nicotinamide mononucleotide (NMN) and 5' monophosphate mRNA. The NAD-cap is present at the 5'-end of some mRNAs and stabilizes RNA against 5'-processing. Has preference for mRNAs with a 5'-end purine. Catalyzes the hydrolysis of a broad range of dinucleotide pyrophosphates. In Escherichia coli O45:K1 (strain S88 / ExPEC), this protein is NAD-capped RNA hydrolase NudC.